The following is a 350-amino-acid chain: tRNA uridine(34) hydroxylase (350 aa).

The region spanning 146–240 (DDPDAVFIDM…YARRAREQGL (95 aa)) is the Rhodanese domain. Cys200 acts as the Cysteine persulfide intermediate in catalysis. Positions 319 to 328 (RRRRAGRENG) are enriched in basic and acidic residues. Positions 319 to 350 (RRRRAGRENGNKIFNKSRGRLNSKLSIPDPAE) are disordered.

This sequence belongs to the TrhO family.

The enzyme catalyses uridine(34) in tRNA + AH2 + O2 = 5-hydroxyuridine(34) in tRNA + A + H2O. Catalyzes oxygen-dependent 5-hydroxyuridine (ho5U) modification at position 34 in tRNAs. This is tRNA uridine(34) hydroxylase from Salmonella agona (strain SL483).